A 1151-amino-acid polypeptide reads, in one-letter code: ATP-dependent helicase/deoxyribonuclease subunit B (1151 aa).

The region spanning 1-273 (MALRLVLGRA…LALAAGVRVE (273 aa)) is the UvrD-like helicase ATP-binding domain. 8-15 (GRAGSGKT) contributes to the ATP binding site. One can recognise a UvrD-like helicase C-terminal domain in the interval 282–578 (PPRFREAPAL…KLRLIPPALD (297 aa)). The [4Fe-4S] cluster site is built by Cys788, Cys1107, Cys1110, and Cys1116.

This sequence belongs to the helicase family. AddB/RexB type 1 subfamily. As to quaternary structure, heterodimer of AddA and AddB. Mg(2+) serves as cofactor. [4Fe-4S] cluster is required as a cofactor.

Functionally, the heterodimer acts as both an ATP-dependent DNA helicase and an ATP-dependent, dual-direction single-stranded exonuclease. Recognizes the chi site generating a DNA molecule suitable for the initiation of homologous recombination. The AddB subunit has 5' -&gt; 3' nuclease activity but not helicase activity. The chain is ATP-dependent helicase/deoxyribonuclease subunit B from Moorella thermoacetica (strain ATCC 39073 / JCM 9320).